A 440-amino-acid polypeptide reads, in one-letter code: Na(+)/H(+) antiporter NhaA (440 aa).

11 helical membrane-spanning segments follow: residues phenylalanine 25–valine 45, leucine 76–valine 96, threonine 112–methionine 132, glycine 141–glycine 161, valine 170–glycine 190, serine 194–serine 214, valine 225–isoleucine 245, histidine 312–isoleucine 332, valine 345–isoleucine 365, tryptophan 378–isoleucine 398, and glycine 414–leucine 434.

This sequence belongs to the NhaA Na(+)/H(+) (TC 2.A.33) antiporter family.

It is found in the cell inner membrane. The catalysed reaction is Na(+)(in) + 2 H(+)(out) = Na(+)(out) + 2 H(+)(in). In terms of biological role, na(+)/H(+) antiporter that extrudes sodium in exchange for external protons. This is Na(+)/H(+) antiporter NhaA from Rhodopirellula baltica (strain DSM 10527 / NCIMB 13988 / SH1).